The sequence spans 80 residues: MQMKATILIVLVALFMIQQSEAGWFGKAFRSVSNFYKKHKTYIHAGLSAATLLGDMTDEEFQEFMQDIEQAREEELLSRQ.

Positions 1-22 are cleaved as a signal peptide; the sequence is MQMKATILIVLVALFMIQQSEA. The residue at position 24 (tryptophan 24) is a 6'-bromotryptophan. Position 53 is a leucine amide (leucine 53). The propeptide at 55-80 is removed in mature form; it reads DMTDEEFQEFMQDIEQAREEELLSRQ.

It is found in the secreted. Functionally, bactericidal against several Gram-positive and Gram-negative bacteria. This is Styelin-C from Styela clava (Sea squirt).